A 502-amino-acid polypeptide reads, in one-letter code: MSQEKYIMAIDQGTTSSRAIIFNKKGEKVSSSQKEFTQIFPQAGWVEHNANEIWNSVQSVIAGAFIESGVKPNQIEAIGITNQRETTVVWDKKTGLPIYNAIVWQSRQTAPLAEQLKSQGYVEKFHEKTGLIIDAYFSATKVRWILDHVEGAQERAEKGELLFGTIDTWLVWKLTDGAAHVTDYSNAARTMLYNIKELKWDDEILEILNIPKAILPEVRSNSEIYGKTAPFHFYGGEVPISGMAGDQQAALFGQLAFEPGMVKNTYGTGSFIIMNTGEEMQLSENNLLTTIGYGINGKVYYALEGSIFIAGSAIQWLRDGLRMVENSPESEKYARDSHNNDEVYVVPAFTGLGAPYWNQNARGSVFGLTRGTSKEDFIKATLQSIAYQVRDIIDTMQMDTQTAIQVLKVDGGAAMNNFLMQFQADILGIDIARAKNLETTALGAAFLAGLSVGYWKDLDELKLLNETGELFEPSMNESRKEQLYKGWKKAVKATQVFAEVDD.

An ADP-binding site is contributed by Thr-14. The ATP site is built by Thr-14, Thr-15, and Ser-16. Thr-14 serves as a coordination point for sn-glycerol 3-phosphate. Position 18 (Arg-18) interacts with ADP. Residues Arg-84, Glu-85, and Tyr-136 each coordinate sn-glycerol 3-phosphate. Residues Arg-84, Glu-85, and Tyr-136 each contribute to the glycerol site. His-232 bears the Phosphohistidine; by HPr mark. Asp-246 is a binding site for sn-glycerol 3-phosphate. Positions 246 and 247 each coordinate glycerol. Residues Thr-268 and Gly-311 each contribute to the ADP site. ATP-binding residues include Thr-268, Gly-311, Gln-315, and Gly-412. ADP-binding residues include Gly-412 and Asn-416.

This sequence belongs to the FGGY kinase family. In terms of assembly, homotetramer and homodimer (in equilibrium). In terms of processing, the phosphoenolpyruvate-dependent sugar phosphotransferase system (PTS), including enzyme I, and histidine-containing protein (HPr) are required for the phosphorylation, which leads to the activation of the enzyme.

It catalyses the reaction glycerol + ATP = sn-glycerol 3-phosphate + ADP + H(+). The protein operates within polyol metabolism; glycerol degradation via glycerol kinase pathway; sn-glycerol 3-phosphate from glycerol: step 1/1. Its activity is regulated as follows. Activated by phosphorylation and inhibited by fructose 1,6-bisphosphate (FBP). Key enzyme in the regulation of glycerol uptake and metabolism. Catalyzes the phosphorylation of glycerol to yield sn-glycerol 3-phosphate. The protein is Glycerol kinase of Streptococcus pneumoniae (strain Hungary19A-6).